A 467-amino-acid chain; its full sequence is 3-isopropylmalate dehydratase large subunit (467 aa).

Residues Cys349, Cys409, and Cys412 each contribute to the [4Fe-4S] cluster site.

It belongs to the aconitase/IPM isomerase family. LeuC type 1 subfamily. Heterodimer of LeuC and LeuD. It depends on [4Fe-4S] cluster as a cofactor.

It carries out the reaction (2R,3S)-3-isopropylmalate = (2S)-2-isopropylmalate. It functions in the pathway amino-acid biosynthesis; L-leucine biosynthesis; L-leucine from 3-methyl-2-oxobutanoate: step 2/4. In terms of biological role, catalyzes the isomerization between 2-isopropylmalate and 3-isopropylmalate, via the formation of 2-isopropylmaleate. In Ruegeria sp. (strain TM1040) (Silicibacter sp.), this protein is 3-isopropylmalate dehydratase large subunit.